A 218-amino-acid polypeptide reads, in one-letter code: Large ribosomal subunit protein uL4 (218 aa).

A disordered region spans residues 46 to 100 (ARQGTHSTKTRAEVRGGGRKPFRQKGTGRARQGSIRAPHFTGGGISHGPKPRDYA). The span at 62–73 (GGRKPFRQKGTG) shows a compositional bias: basic residues.

It belongs to the universal ribosomal protein uL4 family. Part of the 50S ribosomal subunit.

In terms of biological role, one of the primary rRNA binding proteins, this protein initially binds near the 5'-end of the 23S rRNA. It is important during the early stages of 50S assembly. It makes multiple contacts with different domains of the 23S rRNA in the assembled 50S subunit and ribosome. Its function is as follows. Forms part of the polypeptide exit tunnel. The chain is Large ribosomal subunit protein uL4 from Corynebacterium efficiens (strain DSM 44549 / YS-314 / AJ 12310 / JCM 11189 / NBRC 100395).